The following is a 193-amino-acid chain: Probable molybdenum cofactor guanylyltransferase (193 aa).

Residues 9 to 11 (TAG), Lys21, Asp64, and Asp93 contribute to the GTP site. Asp93 is a binding site for Mg(2+).

Belongs to the MobA family. The cofactor is Mg(2+).

The protein resides in the cytoplasm. The enzyme catalyses Mo-molybdopterin + GTP + H(+) = Mo-molybdopterin guanine dinucleotide + diphosphate. In terms of biological role, transfers a GMP moiety from GTP to Mo-molybdopterin (Mo-MPT) cofactor (Moco or molybdenum cofactor) to form Mo-molybdopterin guanine dinucleotide (Mo-MGD) cofactor. In Deinococcus radiodurans (strain ATCC 13939 / DSM 20539 / JCM 16871 / CCUG 27074 / LMG 4051 / NBRC 15346 / NCIMB 9279 / VKM B-1422 / R1), this protein is Probable molybdenum cofactor guanylyltransferase.